Here is a 266-residue protein sequence, read N- to C-terminus: Enoyl-CoA hydratase EchA19 (266 aa).

Glu120 is a catalytic residue. At Lys135 the chain carries N6-succinyllysine. Glu140 is an active-site residue. Lys142 carries the post-translational modification N6-succinyllysine.

It belongs to the enoyl-CoA hydratase/isomerase family. Homotrimer; substrate probably binds in elongated tunnels between the subunits. Succinylated in vitro at pH 8.1, succinylation reduces specific activity of the enzyme 5.5-fold; succinyl-CoA is a downstream by-product of cholesterol degradation. Can be de-succinylated in vitro by NAD-dependent protein deacylase (AC P9WGG3). Succinylation may be a negative feedback regulator of cholesterol metabolism.

It catalyses the reaction (22E)-3-oxochola-4,22-dien-24-oyl-CoA + H2O = (22R)-hydroxy-3-oxo-chol-4-ene-24-oyl-CoA. It functions in the pathway steroid metabolism; cholesterol degradation. Functionally, degradation of the cholesterol side chain involves 3 multistep beta-oxidation cycles, this may be involved in the second cycle. Hydrates 3-OCDO-CoA ((22E)-3-oxo-chol-4,22-dien-24-oyl-CoA) to make (22R)-HOCO-CoA (3-oxo-chol-4-ene-(22R)-hydroxy-24-oyl-CoA). Also acts on octenoyl-CoA. Not active on (E)-3-OCDS-CoA ((E)-3-oxocholest-4,24-dien-26-oyl-CoA) or 3-OPDC-CoA (3-oxo-4,17-pregnadiene-20-carboxyl-CoA). Hydrates the same substrate as ChsH3, but the 2 enzymes make different stereoisomers of the product. The protein is Enoyl-CoA hydratase EchA19 of Mycobacterium tuberculosis (strain ATCC 25618 / H37Rv).